The chain runs to 197 residues: MPKVGMQPIRRQQLIQATLTAVDQVGMGDASIALIARLAGVSNGIISHYFQDKNGLIAATMRHLMNALIQNVRERRQALTEDSPRAHLQVIIEGNFDASQVSGPAMKTWLAFWATSMHHPSLHRLQRINDHRLYSNLCCQFRRTLPLEQARSAARGLAALIDGLWLRGALSGDAFDTEQAQRIAYEYMDFQLAKSAS.

The 61-residue stretch at 8-68 (PIRRQQLIQA…ATMRHLMNAL (61 aa)) folds into the HTH tetR-type domain. A DNA-binding region (H-T-H motif) is located at residues 31–50 (SIALIARLAGVSNGIISHYF).

It functions in the pathway amine and polyamine biosynthesis; betaine biosynthesis via choline pathway [regulation]. Functionally, repressor involved in the biosynthesis of the osmoprotectant glycine betaine. It represses transcription of the choline transporter BetT and the genes of BetAB involved in the synthesis of glycine betaine. The chain is HTH-type transcriptional regulator BetI from Pseudomonas savastanoi pv. phaseolicola (strain 1448A / Race 6) (Pseudomonas syringae pv. phaseolicola (strain 1448A / Race 6)).